Reading from the N-terminus, the 567-residue chain is Phenylalanine ammonia-lyase (567 aa).

The active-site Proton donor/acceptor is tyrosine 78. The 5-imidazolinone (Ala-Gly) cross-link spans 167–169 (ASG). Serine 168 bears the 2,3-didehydroalanine (Ser) mark. (E)-cinnamate is bound by residues asparagine 223, glutamine 311, arginine 317, asparagine 347, lysine 419, glutamate 448, and asparagine 451.

The protein belongs to the PAL/histidase family. As to quaternary structure, homotetramer. In terms of processing, contains an active site 4-methylidene-imidazol-5-one (MIO), which is formed autocatalytically by cyclization and dehydration of residues Ala-Ser-Gly.

The protein resides in the cytoplasm. The enzyme catalyses L-phenylalanine = (E)-cinnamate + NH4(+). It participates in phenylpropanoid metabolism; trans-cinnamate biosynthesis; trans-cinnamate from L-phenylalanine: step 1/1. Catalyzes the non-oxidative deamination of L-phenylalanine to form trans-cinnamic acid, the first step in the phenylpropanoid pathway. The chain is Phenylalanine ammonia-lyase from Trichormus variabilis (strain ATCC 29413 / PCC 7937) (Anabaena variabilis).